The primary structure comprises 185 residues: Large ribosomal subunit protein uL22 (185 aa).

Belongs to the universal ribosomal protein uL22 family. In terms of assembly, component of the large ribosomal subunit. Mature ribosomes consist of a small (40S) and a large (60S) subunit. The 40S subunit contains about 32 different proteins and 1 molecule of RNA (18S). The 60S subunit contains 45 different proteins and 3 molecules of RNA (25S, 5.8S and 5S).

Its subcellular location is the cytoplasm. Its function is as follows. Component of the ribosome, a large ribonucleoprotein complex responsible for the synthesis of proteins in the cell. The small ribosomal subunit (SSU) binds messenger RNAs (mRNAs) and translates the encoded message by selecting cognate aminoacyl-transfer RNA (tRNA) molecules. The large subunit (LSU) contains the ribosomal catalytic site termed the peptidyl transferase center (PTC), which catalyzes the formation of peptide bonds, thereby polymerizing the amino acids delivered by tRNAs into a polypeptide chain. The nascent polypeptides leave the ribosome through a tunnel in the LSU and interact with protein factors that function in enzymatic processing, targeting, and the membrane insertion of nascent chains at the exit of the ribosomal tunnel. The chain is Large ribosomal subunit protein uL22 from Candida albicans (strain SC5314 / ATCC MYA-2876) (Yeast).